Reading from the N-terminus, the 383-residue chain is tRNA-specific 2-thiouridylase MnmA (383 aa).

ATP is bound by residues 11-18 (GLSGGVDS) and Met37. Residues 97–99 (NPD) are interaction with target base in tRNA. Cys102 functions as the Nucleophile in the catalytic mechanism. An intrachain disulfide couples Cys102 to Cys200. Position 127 (Gly127) interacts with ATP. Residues 150–152 (KDQ) form an interaction with tRNA region. Cys200 serves as the catalytic Cysteine persulfide intermediate. The tract at residues 312-313 (RY) is interaction with tRNA. Positions 361 to 383 (IDTAHPADRSAPPALQTQSTEVV) are disordered.

This sequence belongs to the MnmA/TRMU family.

Its subcellular location is the cytoplasm. The catalysed reaction is S-sulfanyl-L-cysteinyl-[protein] + uridine(34) in tRNA + AH2 + ATP = 2-thiouridine(34) in tRNA + L-cysteinyl-[protein] + A + AMP + diphosphate + H(+). Its function is as follows. Catalyzes the 2-thiolation of uridine at the wobble position (U34) of tRNA, leading to the formation of s(2)U34. In Halorhodospira halophila (strain DSM 244 / SL1) (Ectothiorhodospira halophila (strain DSM 244 / SL1)), this protein is tRNA-specific 2-thiouridylase MnmA.